The sequence spans 1006 residues: MTVTSSAAIDIGGGGGGRRSDRLDSDRTSEDMSFIASPANESFQIGASFVDVQNESSGSIDTATATLHELNYTFGMPPVTEESENMPQNYETVVELLPGEERAPINKLTEFPIEGGSLFVTNFRIVVILKDKEVEEALRFLVFPLQDIEQIDLAIPAFIHLSLKIGRMFTICFKTAEDAALVHKILYTAFQRLNRPISSIYTSRPQDWTSKNTDNPMQSLNAFAWKFSEAVDELDRDGKLPSWLLRADSVAQEITHIDFNRLGMSEHFQISSVNENFEVCPTYPEKIIVPKGITDDDIRKGAPYRSIGRFPAVIWRCRKTRAVLMRSSQPQVGILSWRNPTDEKIIEEAVKASRIEGEEKKQFIIMDARGYTSAFANRARSGGFENTEYYQQAKLEFLGLPNIHAVRGSFNNVRTMLHNLGPNEQLLTSLQTTGWLLNLSNLLVNAANCADHLSKGHSVLVHCSDGWDRTTQVTTLAKIMLDEYYRTVKGFEELIRRDWIAFGHKLYDRQLVAFGNWGTSDERSPVFLQFLEAVRHLQREQPTLFQFTHAYLIKLAKHAYSGLFGSFLFNSHKERREAMEKCKGTLVDIWRFIGPHNEEYVNQSFDEHYTGAVKPVNVSVINLRVWHEVFADEEEHYTQIFSPKEERPLSGCTTPMNTSTSTNLVKSKSSESINSLNVDGSAKESSQQHPTCSTTPSDNTNSLPMSTSFIQQSLYQPKVRGVAAIDRDGVIRFEDDEQAMLRKKNKLRAEEIRRKDEKIEELRRRAVLDTNKVSPGQRQSYSESDVETTGTLERVMSDVSMVDPVNELPHFKPNTTWEGESGHCAYCKKEFNKLSVYVEDRQHHCRNCGRVVCEDCSKNRFSVIEEGKSVQKRACDSCYDSMHETDLKLSSSSTTTTSSSTKIENDSNVPGLDNNSDNVSENVSENAIPDIIVEEKEAEDPIKEAESPSKETKCPKTLRNFISFSPKSSMRKNKVHSRDPLKSIDEGSSSQQAESDDVLDVNEQPL.

Over residues 1–10 (MTVTSSAAID) the composition is skewed to low complexity. Residues 1-29 (MTVTSSAAIDIGGGGGGRRSDRLDSDRTS) form a disordered region. Positions 18 to 29 (RRSDRLDSDRTS) are enriched in basic and acidic residues. The 407-residue stretch at 224 to 630 (AWKFSEAVDE…INLRVWHEVF (407 aa)) folds into the Myotubularin phosphatase domain. Asn377, Asn402, and Ile403 together coordinate a 1,2-diacyl-sn-glycero-3-phospho-(1D-myo-inositol-3,5-bisphosphate). A 1,2-diacyl-sn-glycero-3-phospho-(1D-myo-inositol-3-phosphate) contacts are provided by Asn377, Asn402, and Ile403. Cys463 acts as the Phosphocysteine intermediate in catalysis. A 1,2-diacyl-sn-glycero-3-phospho-(1D-myo-inositol-3,5-bisphosphate) contacts are provided by Ser464, Asp465, Gly466, Trp467, Asp468, Arg469, Lys505, and Arg509. Positions 464, 465, 466, 467, 468, and 469 each coordinate a 1,2-diacyl-sn-glycero-3-phospho-(1D-myo-inositol-3-phosphate). Arg509 is an a 1,2-diacyl-sn-glycero-3-phospho-(1D-myo-inositol-3-phosphate) binding site. A disordered region spans residues 641-705 (FSPKEERPLS…PSDNTNSLPM (65 aa)). Positions 651 to 705 (GCTTPMNTSTSTNLVKSKSSESINSLNVDGSAKESSQQHPTCSTTPSDNTNSLPM) are enriched in polar residues. Residues 818 to 883 (EGESGHCAYC…ACDSCYDSMH (66 aa)) form an FYVE-type zinc finger. The Zn(2+) site is built by Cys824, Cys827, Cys845, Cys848, Cys853, Cys856, Cys875, and Cys878. The interval 886-1006 (DLKLSSSSTT…DVLDVNEQPL (121 aa)) is disordered. 2 stretches are compositionally biased toward low complexity: residues 890-901 (SSSSTTTTSSST) and 913-926 (DNNS…VSEN). Composition is skewed to basic and acidic residues over residues 933–954 (VEEK…ETKC) and 976–985 (HSRDPLKSID).

It belongs to the protein-tyrosine phosphatase family. Non-receptor class myotubularin subfamily. Expressed in the body wall muscle and in eggs. Expressed in head neurons. Expressed in the intestine. Expressed in pharyngeal cells, vulval muscle cells and cells of the tail region.

Its subcellular location is the cytoplasm. It localises to the membrane. It carries out the reaction a 1,2-diacyl-sn-glycero-3-phospho-(1D-myo-inositol-3,5-bisphosphate) + H2O = a 1,2-diacyl-sn-glycero-3-phospho-(1D-myo-inositol-5-phosphate) + phosphate. The enzyme catalyses a 1,2-diacyl-sn-glycero-3-phospho-(1D-myo-inositol-3-phosphate) + H2O = a 1,2-diacyl-sn-glycero-3-phospho-(1D-myo-inositol) + phosphate. It catalyses the reaction 1,2-dihexadecanoyl-sn-glycero-3-phospho-(1D-myo-inositol-3-phosphate) + H2O = 1,2-dihexadecanoyl-sn-glycero-3-phospho-(1D-myo-inositol) + phosphate. The catalysed reaction is 1,2-dihexadecanoyl-sn-glycero-3-phospho-(1D-myo-inositol-3,5-phosphate) + H2O = 1,2-dihexadecanoyl-sn-glycero-3-phospho-(1D-myo-inositol-5-phosphate) + phosphate. It carries out the reaction 1,2-dioctanoyl-sn-glycero-3-phospho-(1-D-myo-inositol-3-phosphate) + H2O = 1,2-dioctanoyl-sn-glycero-3-phospho-(1D-myo-inositol) + phosphate. Its activity is regulated as follows. Inhibited by sodium vanadate and peroxide. Its function is as follows. Preferentially dephosphorylates phosphatidylinositol 3-phosphate (PI3P), and has some activity towards phosphatidylinositol 3,5-bisphosphate (PI35P). Positively regulates autophagy and is recruited to autophagosomes by PI3P where it catalyzes PI3P turnover to promote autophagosome maturation. Thought to have a role in maintenance of muscle function. Involved in locomotion and lifespan determination. The chain is Phosphatidylinositol-3,5-bisphosphate 3-phosphatase MTMR3 from Caenorhabditis elegans.